Here is a 261-residue protein sequence, read N- to C-terminus: Cytochrome c oxidase subunit 3 (261 aa).

At 1-15 the chain is on the mitochondrial matrix side; that stretch reads MAHQAHPYHMVDPSP. A helical membrane pass occupies residues 16–34; it reads WPLTGATAALLMTSGLAIW. The Mitochondrial intermembrane segment spans residues 35–40; the sequence is FHFHSL. The chain crosses the membrane as a helical span at residues 41 to 66; sequence LLLYLGLTLLLLTMIQWWRDIIREGT. The Mitochondrial matrix portion of the chain corresponds to 67–72; that stretch reads FQGHHT. The helical transmembrane segment at 73 to 105 threads the bilayer; sequence PPVQKGLRYGMILFIVSEVFFFLGFFWAFYHSS. Over 106–128 the chain is Mitochondrial intermembrane; sequence LAPTPELGGCWPPTGINPLDPFE. The helical transmembrane segment at 129–152 threads the bilayer; sequence VPLLNTAVLLASGVTVTWAHHGLM. Residues 153-155 are Mitochondrial matrix-facing; it reads EGN. The chain crosses the membrane as a helical span at residues 156–183; that stretch reads RKEAIQALTLTIILGVYFTALQAMEYYE. The Mitochondrial intermembrane segment spans residues 184-190; that stretch reads APFTIAD. Residues 191–223 form a helical membrane-spanning segment; it reads GVYGTTFFVATGFHGLHVIIGSTFLAVCLLRQV. At 224 to 232 the chain is on the mitochondrial matrix side; the sequence is LYHFTSEHH. The helical transmembrane segment at 233–256 threads the bilayer; sequence FGFEAAAWYWHFVDVVWLFLYVSI. At 257-261 the chain is on the mitochondrial intermembrane side; sequence YWWGS.

This sequence belongs to the cytochrome c oxidase subunit 3 family. In terms of assembly, component of the cytochrome c oxidase (complex IV, CIV), a multisubunit enzyme composed of 14 subunits. The complex is composed of a catalytic core of 3 subunits MT-CO1, MT-CO2 and MT-CO3, encoded in the mitochondrial DNA, and 11 supernumerary subunits COX4I, COX5A, COX5B, COX6A, COX6B, COX6C, COX7A, COX7B, COX7C, COX8 and NDUFA4, which are encoded in the nuclear genome. The complex exists as a monomer or a dimer and forms supercomplexes (SCs) in the inner mitochondrial membrane with NADH-ubiquinone oxidoreductase (complex I, CI) and ubiquinol-cytochrome c oxidoreductase (cytochrome b-c1 complex, complex III, CIII), resulting in different assemblies (supercomplex SCI(1)III(2)IV(1) and megacomplex MCI(2)III(2)IV(2)).

The protein resides in the mitochondrion inner membrane. The enzyme catalyses 4 Fe(II)-[cytochrome c] + O2 + 8 H(+)(in) = 4 Fe(III)-[cytochrome c] + 2 H2O + 4 H(+)(out). Component of the cytochrome c oxidase, the last enzyme in the mitochondrial electron transport chain which drives oxidative phosphorylation. The respiratory chain contains 3 multisubunit complexes succinate dehydrogenase (complex II, CII), ubiquinol-cytochrome c oxidoreductase (cytochrome b-c1 complex, complex III, CIII) and cytochrome c oxidase (complex IV, CIV), that cooperate to transfer electrons derived from NADH and succinate to molecular oxygen, creating an electrochemical gradient over the inner membrane that drives transmembrane transport and the ATP synthase. Cytochrome c oxidase is the component of the respiratory chain that catalyzes the reduction of oxygen to water. Electrons originating from reduced cytochrome c in the intermembrane space (IMS) are transferred via the dinuclear copper A center (CU(A)) of subunit 2 and heme A of subunit 1 to the active site in subunit 1, a binuclear center (BNC) formed by heme A3 and copper B (CU(B)). The BNC reduces molecular oxygen to 2 water molecules using 4 electrons from cytochrome c in the IMS and 4 protons from the mitochondrial matrix. This chain is Cytochrome c oxidase subunit 3 (MT-CO3), found in Scyliorhinus canicula (Small-spotted catshark).